A 447-amino-acid chain; its full sequence is N-succinylarginine dihydrolase (447 aa).

Residues alanine 19 to serine 28, asparagine 110, and histidine 137 to arginine 138 contribute to the substrate site. The active site involves glutamate 174. Arginine 212 contributes to the substrate binding site. Histidine 248 is a catalytic residue. Substrate-binding residues include aspartate 250 and asparagine 359. Cysteine 365 (nucleophile) is an active-site residue.

This sequence belongs to the succinylarginine dihydrolase family. In terms of assembly, homodimer.

The enzyme catalyses N(2)-succinyl-L-arginine + 2 H2O + 2 H(+) = N(2)-succinyl-L-ornithine + 2 NH4(+) + CO2. Its pathway is amino-acid degradation; L-arginine degradation via AST pathway; L-glutamate and succinate from L-arginine: step 2/5. Functionally, catalyzes the hydrolysis of N(2)-succinylarginine into N(2)-succinylornithine, ammonia and CO(2). This chain is N-succinylarginine dihydrolase, found in Salmonella dublin (strain CT_02021853).